The following is a 356-amino-acid chain: MSL complex subunit 3B (356 aa).

The 349-residue stretch at 2 to 350 (EERTVTLEIP…SEVHYSTRNP (349 aa)) folds into the MRG domain. Disordered stretches follow at residues 135–210 (TNRS…WQQD) and 225–247 (KTPV…SPVF). The segment covering 142 to 156 (LSPSLRLLNPSRPQS) has biased composition (low complexity). Composition is skewed to polar residues over residues 178–189 (AVQSLRRSSPHT) and 229–243 (HSRS…SQEG).

The protein resides in the nucleus. In terms of biological role, probable non-catalytic component of the MSL histone acetyltransferase complex, a multiprotein complex that mediates the majority of histone H4 acetylation at 'Lys-16' (H4K16ac), an epigenetic mark that prevents chromatin compaction. This is MSL complex subunit 3B from Homo sapiens (Human).